A 51-amino-acid chain; its full sequence is Lysis protein for colicin A (51 aa).

The first 18 residues, 1-18 (MKKIIICVILLAIMLLAA), serve as a signal peptide directing secretion. Cysteine 19 carries the N-palmitoyl cysteine lipid modification. Residue cysteine 19 is the site of S-diacylglycerol cysteine attachment. The interval 27-51 (TGGGSVSPSSIVTGVSMGSDGVGNP) is disordered.

The protein localises to the cell outer membrane. Its function is as follows. Lysis proteins are required for both colicin release and partial cell lysis. The sequence is that of Lysis protein for colicin A (cal) from Citrobacter freundii.